A 165-amino-acid polypeptide reads, in one-letter code: GTP-dependent dephospho-CoA kinase (165 aa).

Residues Asp44, Val45, Asp63, Lys65, Glu115, and Asp138 each coordinate GTP.

The protein belongs to the GTP-dependent DPCK family.

It catalyses the reaction 3'-dephospho-CoA + GTP = GDP + CoA + H(+). It functions in the pathway cofactor biosynthesis; coenzyme A biosynthesis. Catalyzes the GTP-dependent phosphorylation of the 3'-hydroxyl group of dephosphocoenzyme A to form coenzyme A (CoA). The chain is GTP-dependent dephospho-CoA kinase from Picrophilus torridus (strain ATCC 700027 / DSM 9790 / JCM 10055 / NBRC 100828 / KAW 2/3).